The primary structure comprises 887 residues: Alanine--tRNA ligase (887 aa).

Basic and acidic residues predominate over residues 425 to 441; sequence MQEQKSRARSDRREKQQ. Residues 425–448 form a disordered region; that stretch reads MQEQKSRARSDRREKQQTGDGAGS. Zn(2+) contacts are provided by H569, H573, C672, and H676.

This sequence belongs to the class-II aminoacyl-tRNA synthetase family. It depends on Zn(2+) as a cofactor.

It localises to the cytoplasm. The enzyme catalyses tRNA(Ala) + L-alanine + ATP = L-alanyl-tRNA(Ala) + AMP + diphosphate. Functionally, catalyzes the attachment of alanine to tRNA(Ala) in a two-step reaction: alanine is first activated by ATP to form Ala-AMP and then transferred to the acceptor end of tRNA(Ala). Also edits incorrectly charged Ser-tRNA(Ala) and Gly-tRNA(Ala) via its editing domain. The sequence is that of Alanine--tRNA ligase from Chlorobium luteolum (strain DSM 273 / BCRC 81028 / 2530) (Pelodictyon luteolum).